A 102-amino-acid polypeptide reads, in one-letter code: Small ribosomal subunit protein uS10 (102 aa).

It belongs to the universal ribosomal protein uS10 family. As to quaternary structure, part of the 30S ribosomal subunit.

Involved in the binding of tRNA to the ribosomes. This Methylocella silvestris (strain DSM 15510 / CIP 108128 / LMG 27833 / NCIMB 13906 / BL2) protein is Small ribosomal subunit protein uS10.